The sequence spans 209 residues: MSKVTQIAHPLILHKLALIRDKNTGSKDFRELVEEVAMLMAYEVTRDLQLKEVEIETPICKTKCKMLSGKKVAIVPILRAGLGMVGGMTSLIPAAKVGHIGLYRDEETLKPVEYFCKLPQDIGDRDVIVTDPMLATGGSAKDAITLLKQKGAKHIRLMCLVAAPEGIKEVMDEHPDVDIYVASVDEKLNEKGYVVPGLGDAGDRLYGTK.

Residues R79, R104, and D131–S139 contribute to the 5-phospho-alpha-D-ribose 1-diphosphate site. Uracil contacts are provided by residues V194 and G199–A201. A 5-phospho-alpha-D-ribose 1-diphosphate-binding site is contributed by D200.

Belongs to the UPRTase family. Mg(2+) is required as a cofactor.

The enzyme catalyses UMP + diphosphate = 5-phospho-alpha-D-ribose 1-diphosphate + uracil. Its pathway is pyrimidine metabolism; UMP biosynthesis via salvage pathway; UMP from uracil: step 1/1. Allosterically activated by GTP. In terms of biological role, catalyzes the conversion of uracil and 5-phospho-alpha-D-ribose 1-diphosphate (PRPP) to UMP and diphosphate. The sequence is that of Uracil phosphoribosyltransferase from Clostridium botulinum (strain ATCC 19397 / Type A).